Here is a 366-residue protein sequence, read N- to C-terminus: Chorismate synthase (366 aa).

The NADP(+) site is built by Arg48 and Arg54. FMN contacts are provided by residues 125–127, 237–238, Gly277, 292–296, and Arg318; these read RSS, NA, and KPTSS.

The protein belongs to the chorismate synthase family. As to quaternary structure, homotetramer. It depends on FMNH2 as a cofactor.

The catalysed reaction is 5-O-(1-carboxyvinyl)-3-phosphoshikimate = chorismate + phosphate. Its pathway is metabolic intermediate biosynthesis; chorismate biosynthesis; chorismate from D-erythrose 4-phosphate and phosphoenolpyruvate: step 7/7. Its function is as follows. Catalyzes the anti-1,4-elimination of the C-3 phosphate and the C-6 proR hydrogen from 5-enolpyruvylshikimate-3-phosphate (EPSP) to yield chorismate, which is the branch point compound that serves as the starting substrate for the three terminal pathways of aromatic amino acid biosynthesis. This reaction introduces a second double bond into the aromatic ring system. This chain is Chorismate synthase, found in Acidovorax sp. (strain JS42).